The chain runs to 142 residues: uncharacterized protein (142 aa).

The 120-residue stretch at 1–120 (MADKFDANDE…TILKWEKNMD (120 aa)) folds into the N-acetyltransferase domain.

This sequence belongs to the acetyltransferase family.

This is an uncharacterized protein from Streptococcus pyogenes serotype M1.